A 310-amino-acid polypeptide reads, in one-letter code: p-hydroxybenzoic acid efflux pump subunit AaeA (310 aa).

Residues 12 to 32 form a helical membrane-spanning segment; it reads AITLVLVILAFIAIFRAWVYY.

This sequence belongs to the membrane fusion protein (MFP) (TC 8.A.1) family.

The protein resides in the cell inner membrane. Forms an efflux pump with AaeB. The sequence is that of p-hydroxybenzoic acid efflux pump subunit AaeA from Citrobacter koseri (strain ATCC BAA-895 / CDC 4225-83 / SGSC4696).